The chain runs to 355 residues: Chorismate synthase (355 aa).

Arginine 48 serves as a coordination point for NADP(+). FMN contacts are provided by residues 125–127 (RSS), 238–239 (NA), glycine 278, 293–297 (KPASS), and arginine 319.

It belongs to the chorismate synthase family. In terms of assembly, homotetramer. FMNH2 serves as cofactor.

It catalyses the reaction 5-O-(1-carboxyvinyl)-3-phosphoshikimate = chorismate + phosphate. It participates in metabolic intermediate biosynthesis; chorismate biosynthesis; chorismate from D-erythrose 4-phosphate and phosphoenolpyruvate: step 7/7. Functionally, catalyzes the anti-1,4-elimination of the C-3 phosphate and the C-6 proR hydrogen from 5-enolpyruvylshikimate-3-phosphate (EPSP) to yield chorismate, which is the branch point compound that serves as the starting substrate for the three terminal pathways of aromatic amino acid biosynthesis. This reaction introduces a second double bond into the aromatic ring system. This chain is Chorismate synthase, found in Baumannia cicadellinicola subsp. Homalodisca coagulata.